The sequence spans 711 residues: Polyribonucleotide nucleotidyltransferase (711 aa).

D486 and D492 together coordinate Mg(2+). Positions 553-612 (PRIHTIKISPDKIKDVIGKGGSVIRALTEETGTTIEIEDDGTVKIAATDGEKAKFAIRRI) constitute a KH domain. The S1 motif domain occupies 622–690 (GRIYNGKVTR…RQGRVRLSIK (69 aa)). The disordered stretch occupies residues 690–711 (KEATEQTQPAAAPEAPAAEQGE). A compositionally biased stretch (low complexity) spans 694-711 (EQTQPAAAPEAPAAEQGE).

Belongs to the polyribonucleotide nucleotidyltransferase family. As to quaternary structure, component of the RNA degradosome, which is a multiprotein complex involved in RNA processing and mRNA degradation. Mg(2+) is required as a cofactor.

It is found in the cytoplasm. The enzyme catalyses RNA(n+1) + phosphate = RNA(n) + a ribonucleoside 5'-diphosphate. Functionally, involved in mRNA degradation. Catalyzes the phosphorolysis of single-stranded polyribonucleotides processively in the 3'- to 5'-direction. In Enterobacter sp. (strain 638), this protein is Polyribonucleotide nucleotidyltransferase.